A 142-amino-acid polypeptide reads, in one-letter code: Large ribosomal subunit protein mL42 (142 aa).

The N-terminal 32 residues, 1 to 32 (MALAAVKWAISSRTMLKHLFPVENGALYCVGH), are a transit peptide targeting the mitochondrion.

Belongs to the mitochondrion-specific ribosomal protein mL42 family. Component of the mitochondrial ribosome large subunit (39S) which comprises a 16S rRNA and about 50 distinct proteins. Component of the mitochondrial ribosome small subunit (28S) which comprises a 12S rRNA and about 30 distinct proteins.

It is found in the mitochondrion. The sequence is that of Large ribosomal subunit protein mL42 (MRPL42) from Bos taurus (Bovine).